A 559-amino-acid polypeptide reads, in one-letter code: Protein NRT1/ PTR FAMILY 2.8 (559 aa).

11 helical membrane passes run 57–77 (GVFL…LTLA), 92–112 (LLLG…TAAL), 132–152 (KWQL…AGGV), 178–198 (FFNW…TGVV), 206–226 (WVIG…TFVI), 321–341 (LKCV…FILT), 374–394 (VSMI…IPIV), 404–424 (LTLK…VAGF), 437–457 (GSFV…LAGL), 481–501 (VAGA…TLLI), and 529–549 (YFFI…LFAS).

This sequence belongs to the major facilitator superfamily. Proton-dependent oligopeptide transporter (POT/PTR) (TC 2.A.17) family. As to expression, expressed in flowers.

The protein resides in the membrane. The polypeptide is Protein NRT1/ PTR FAMILY 2.8 (NPF2.8) (Arabidopsis thaliana (Mouse-ear cress)).